The sequence spans 393 residues: MAQNQQPIFQTKPPEQFVQIPINIERDSSTTRMNQTGNTIRKPNHWPTITISIIFVIIGQSIAKLLENFYYDKTNRSEYNENRQNDGVWTQSLLQTVGFPLLLLPFLIFITKNKRNHHQQPPITSDSIHLKSLAVIYICIGIIMSVQGRLAAMGKLEIPFGVFTLIYTAQLFFTPIFAAFINKIKFNRWVVISVILAIITGALTLSSSFGGEPDEAEENYARGSWAALFAGICFALLLCNIQNVFDSYIFKRTESTNQKPSFASVFEVIIFSSLVATIISVVGLLIAGEQHDLKREMNGFSKGKGSYVMAMVGQAVSWQVYWVGIVGLVYSVSSVLSNVISVITWPIVSVLVVIFFNFMDDEFDAFKGVALVTAVLSAAAYFFRLHKDNRMAY.

Ala-2 is modified (N-acetylalanine). Transmembrane regions (helical) follow at residues Trp-46–Leu-66, Thr-90–Ile-110, Leu-133–Met-153, Gly-161–Ile-181, Trp-189–Phe-209, Trp-225–Phe-245, Val-268–Gly-288, Val-308–Leu-328, Val-339–Met-359, and Phe-363–Phe-383.

It belongs to the purine permeases (TC 2.A.7.14) family. Expressed in seedlings, leaves, embryos, ovules, seeds and the root and shoot meristems. In heart-stage embryos, detected in cells that failed to respond to cytokinins, including the prospective cotyledons.

It is found in the cell membrane. Its function is as follows. Purine permease implicated in ATP-dependent cytokinin translocation that controls the spatiotemporal landscape of cytokinin signaling. Depletes ligands from the apoplast, which leads to a suppression of the cytokinin response. In Arabidopsis thaliana (Mouse-ear cress), this protein is Purine permease 14.